Reading from the N-terminus, the 309-residue chain is Methionine synthase (309 aa).

The Zn(2+) site is built by His-201, Cys-203, Glu-224, and Cys-285.

This sequence belongs to the archaeal MetE family. Requires Zn(2+) as cofactor.

It functions in the pathway amino-acid biosynthesis; L-methionine biosynthesis via de novo pathway. Is activated by phosphates. Catalyzes the transfer of a methyl group to L-homocysteine resulting in methionine formation. Can use methylcobalamin and methylcobinamide as methyl donors, but methylcobalamin is not considered to be the physiological substrate. It was proposed that, in vivo, a so-far-unidentified enzyme catalyzes methyltransfer from 5-methyltetrahydromethanopterin (5-CH3-H4MPT) to a corrinoid protein, and that the MetE gene product catalyzes the further transfer to L-homocysteine. Is not active with L-cysteine, coenzyme M, coenzyme B, glutathione or dithiothreitol as substrate. The protein is Methionine synthase of Methanothermobacter marburgensis (strain ATCC BAA-927 / DSM 2133 / JCM 14651 / NBRC 100331 / OCM 82 / Marburg) (Methanobacterium thermoautotrophicum).